The chain runs to 223 residues: AN1-type zinc finger protein 6 (223 aa).

An A20-type zinc finger spans residues 8–42 (SQAPMLCSTGCGFYGNPRTNGMCSVCYKEHLQRQN). Positions 14, 18, 30, and 33 each coordinate Zn(2+). The interval 41–155 (QNSSNGRISP…PSEEQSKSLE (115 aa)) is disordered. Residue Ser49 is modified to Phosphoserine. Polar residues-rich tracts occupy residues 77-110 (ALDS…STSV) and 137-148 (SSVSDTTQQPSE). The AN1-type zinc-finger motif lies at 158-204 (KQKKNRCFMCRKKVGLTGFECRCGNVYCGVHRYSDVHNCSYNYKADA). Residues Cys164, Cys167, Cys178, Cys180, Cys185, His188, His194, and Cys196 each coordinate Zn(2+). At Lys219 the chain carries N6-acetyllysine.

In terms of assembly, interacts with PKN1. Interacts with TRAF2. Interacts with mono- and polyubiquitin. Interacts with PEX6. Interacts with PEX5 (Cys-linked ubiquitinated).

It is found in the cytoplasm. In terms of biological role, involved in regulation of TNF-alpha induced NF-kappa-B activation and apoptosis. Involved in modulation of 'Lys-48'-linked polyubiquitination status of TRAF2 and decreases association of TRAF2 with RIPK1. Required for PTS1 target sequence-dependent protein import into peroxisomes and PEX5 stability; may cooperate with PEX6. In vitro involved in PEX5 export from the cytosol to peroxisomes. In Mus musculus (Mouse), this protein is AN1-type zinc finger protein 6 (Zfand6).